The chain runs to 848 residues: Beta-galactosidase 11 (848 aa).

The N-terminal stretch at 1–23 (MSAAAVLAVVAAAVAALAAAASG) is a signal peptide. N29 carries N-linked (GlcNAc...) asparagine glycosylation. Residue E189 is the Proton donor of the active site. E260 serves as the catalytic Nucleophile. Residues N261, N472, and N783 are each glycosylated (N-linked (GlcNAc...) asparagine). One can recognise an SUEL-type lectin domain in the interval 750–837 (GGLKPTAVLS…GTLAVQAKCS (88 aa)).

This sequence belongs to the glycosyl hydrolase 35 family.

The protein resides in the secreted. The protein localises to the extracellular space. It is found in the apoplast. The catalysed reaction is Hydrolysis of terminal non-reducing beta-D-galactose residues in beta-D-galactosides.. In Oryza sativa subsp. japonica (Rice), this protein is Beta-galactosidase 11.